Consider the following 450-residue polypeptide: Glucose-6-phosphate isomerase (450 aa).

Thr39 is subject to Phosphothreonine. Glu291 functions as the Proton donor in the catalytic mechanism. Residues His312 and Lys426 contribute to the active site.

It belongs to the GPI family.

The protein resides in the cytoplasm. The enzyme catalyses alpha-D-glucose 6-phosphate = beta-D-fructose 6-phosphate. It functions in the pathway carbohydrate biosynthesis; gluconeogenesis. The protein operates within carbohydrate degradation; glycolysis; D-glyceraldehyde 3-phosphate and glycerone phosphate from D-glucose: step 2/4. Functionally, catalyzes the reversible isomerization of glucose-6-phosphate to fructose-6-phosphate. This is Glucose-6-phosphate isomerase from Bacillus thuringiensis (strain Al Hakam).